A 129-amino-acid polypeptide reads, in one-letter code: Small ribosomal subunit protein uS8 (129 aa).

Belongs to the universal ribosomal protein uS8 family. Part of the 30S ribosomal subunit.

Its function is as follows. One of the primary rRNA binding proteins, it binds directly to 16S rRNA central domain where it helps coordinate assembly of the platform of the 30S subunit. This chain is Small ribosomal subunit protein uS8, found in Nanoarchaeum equitans (strain Kin4-M).